The chain runs to 227 residues: Calcium-binding protein 1 (227 aa).

Gly2 carries N-myristoyl glycine lipidation. Cys4 is lipidated: S-palmitoyl cysteine. EF-hand domains are found at residues 82–117, 136–153, 159–194, and 196–227; these read EEIE…MGYM, GHVD…KLLA, IGVK…LLGH, and VGHR…MMSR. Ca(2+) is bound by residues Asp95, Asp97, Asp99, Tyr101, and Asp106. Residues Asp172, Asn174, Asp176, and Glu178 each coordinate Ca(2+). Ser180 bears the Phosphoserine mark. Ca(2+)-binding residues include Glu183, Asp209, Asn211, Asp213, Arg215, and Glu220.

As to quaternary structure, homodimer; when bound to calcium or magnesium. Interacts (via C-terminus) with ITPR1, ITPR2 and ITPR3. This binding is calcium dependent and the interaction correlates with calcium concentration. An additional calcium-independent interaction with the N-terminus of ITPR1 results in a decreased InsP(3) binding to the receptor. Interacts with CACNA1A (via C-terminal CDB motif) in the pre- and postsynaptic membranes. Interacts with CACNA1D and CACNA1C (via C-terminal C and IQ motifs). The binding to the C motif is calcium independent whereas the binding to IQ requires the presence of calcium and is mutually exclusive with calmodulin binding. Interacts with TRPC5 (via C-terminus). Interacts (via EF-hands 1 and 2) at microtubules with MAP1LC3B. Interacts with MYO1C. Interacts (via EF-hands 1 and 2) with NSMF (via the central NLS-containing motif region), the interaction occurs in a calcium dependent manner after synaptic NMDA receptor stimulation and prevents nuclear import of NSMF. Interacts with SPACA9 homolog. Post-translationally, phosphorylated. The phosphorylation regulates the activity. In terms of tissue distribution, expressed in the inner retina, specifically in amacrine cells and in cone OFF-bipolar cells (at protein level).

Its function is as follows. Modulates calcium-dependent activity of inositol 1,4,5-triphosphate receptors (ITPRs). Inhibits agonist-induced intracellular calcium signaling. Enhances inactivation and does not support calcium-dependent facilitation of voltage-dependent P/Q-type calcium channels. Causes calcium-dependent facilitation and inhibits inactivation of L-type calcium channels by binding to the same sites as calmodulin in the C-terminal domain of CACNA1C, but has an opposite effect on channel function. Suppresses the calcium-dependent inactivation of CACNA1D. Inhibits TRPC5 channels. Prevents NMDA receptor-induced cellular degeneration. Required for the normal transfer of light signals through the retina. In Mus musculus (Mouse), this protein is Calcium-binding protein 1 (Cabp1).